Here is a 187-residue protein sequence, read N- to C-terminus: UPF0301 protein YPO0936/y3322/YP_3506 (187 aa).

It belongs to the UPF0301 (AlgH) family.

The protein is UPF0301 protein YPO0936/y3322/YP_3506 of Yersinia pestis.